We begin with the raw amino-acid sequence, 216 residues long: Maintenance of carboxysome distribution protein A (216 aa).

Positions 16, 17, 19, 20, 21, 22, and 45 each coordinate ATP. Threonine 21 is a Mg(2+) binding site.

The protein belongs to the ParA family. McdA subfamily. In terms of assembly, self-associates, associates with McdB.

It localises to the cytoplasm. It is found in the nucleoid. The enzyme catalyses ATP + H2O = ADP + phosphate + H(+). In terms of biological role, mcdA and McdB together mediate carboxysome positioning on the nucleoid and prevent their aggregation in the cell. McdA is an ATPase that forms dynamic gradients on the nucleoid in response to adapter protein McdB, which associates with carboxysomes. The interplay between McdA gradients on the nucleoid and McdB-bound carboxysomes result in the equal spacing of Cbs along the cell length. Functionally, incorrect positioning (aggregation) of carboxysomes results in reduced CO(2) fixation by encapsulated form 1 ribulose-1,5-bisphosphate carboxylase (RuBisCO, cbbL/cbbS), which leads to slower growth. The chain is Maintenance of carboxysome distribution protein A from Halothiobacillus neapolitanus (strain ATCC 23641 / c2) (Thiobacillus neapolitanus).